Here is a 394-residue protein sequence, read N- to C-terminus: Putative bacilysin exporter BacE (394 aa).

11 helical membrane-spanning segments follow: residues 11-31, 43-63, 69-89, 92-112, 142-162, 166-186, 215-235, 244-264, 288-308, 332-352, and 353-373; these read LLYGQALSFMGDYCVLPALLI, SGVIVVRSIPMVFQPFLGVLV, IKIMLWTDIIRGIIFLGLTFL, GEYPLIFLALLFITYGSGVFF, IIVGAAAGGLFLLGGSVELAV, GVTYLVSAFFISRIKLQFVPI, MFTMITMALLWGVVYSYFPIV, IGNFILTFCIGFGGFIGAALV, LFLFTPIFAVSVIAAILFFIA, IFSVAEASIGLCISIGSMFIN, and ILSAPVIMGLIVVIVCGLFLH.

This sequence belongs to the major facilitator superfamily. Drug:H(+) antiporter-3 (DHA3) (TC 2.A.1.21) family.

The protein localises to the cell membrane. Part of the bacilysin biosynthesis operon. May be involved in self-resistance to bacilysin by permitting efflux of this antibiotic. The polypeptide is Putative bacilysin exporter BacE (bacE) (Bacillus subtilis (strain 168)).